A 145-amino-acid chain; its full sequence is Arginine repressor (145 aa).

This sequence belongs to the ArgR family.

It is found in the cytoplasm. Its pathway is amino-acid biosynthesis; L-arginine biosynthesis [regulation]. In terms of biological role, regulates arginine biosynthesis genes. The polypeptide is Arginine repressor (Streptococcus equi subsp. zooepidemicus (strain H70)).